Consider the following 116-residue polypeptide: Large ribosomal subunit protein bL20 (116 aa).

This sequence belongs to the bacterial ribosomal protein bL20 family.

Functionally, binds directly to 23S ribosomal RNA and is necessary for the in vitro assembly process of the 50S ribosomal subunit. It is not involved in the protein synthesizing functions of that subunit. This chain is Large ribosomal subunit protein bL20, found in Helicobacter pylori (strain Shi470).